A 452-amino-acid polypeptide reads, in one-letter code: Keratin, type I cytoskeletal 15 (452 aa).

Residues 1–97 form a head region; it reads MATTFLQTSS…GGDGGLLSGN (97 aa). S15, S16, S28, S33, and S47 each carry phosphoserine. Positions 98–133 are coil 1A; the sequence is EKVTMQNLNDRLASYLDKVRALEQANTELEVKIRDW. One can recognise an IF rod domain in the interval 98 to 410; the sequence is EKVTMQNLND…NLLEGQDAKM (313 aa). T124 carries the post-translational modification Phosphothreonine. A linker 1 region spans residues 134 to 152; the sequence is YQKQSPASPDRDYSHYFKT. The coil 1B stretch occupies residues 153 to 244; the sequence is MEEIRDKILA…KNHEEEMKEF (92 aa). Residues 245 to 264 form a linker 12 region; the sequence is SSQLAGQVNVEMDAAPGVDL. The tract at residues 265–406 is coil 2; that stretch reads TRMLAEMREQ…ATYRNLLEGQ (142 aa). A Glycyl lysine isopeptide (Lys-Gly) (interchain with G-Cter in SUMO2) cross-link involves residue K293. Residues T294 and T316 each carry the phosphothreonine modification. The tail stretch occupies residues 407-452; it reads DAKMAGIGVREGSSGGGGSSSSSSNFHISVEESVDGKVVSSRKREI. The segment at 413–452 is disordered; that stretch reads IGVREGSSGGGGSSSSSSNFHISVEESVDGKVVSSRKREI. K443 participates in a covalent cross-link: Glycyl lysine isopeptide (Lys-Gly) (interchain with G-Cter in SUMO1); alternate. Residue K443 forms a Glycyl lysine isopeptide (Lys-Gly) (interchain with G-Cter in SUMO2); alternate linkage.

This sequence belongs to the intermediate filament family. As to quaternary structure, heterotetramer of two type I and two type II keratins. Forms a heterodimer with KRT14. Interacts with PLEC isoform 1C, when in a heterodimer with KRT14. Interacts with NOD2. As to expression, expressed strongly in the basal cell layer at the tips of rete-like prominences (RLPs) of adult dorsal tongue, outer root sheath (ORS) of hair follicle and skin epidermis (at protein level).

In terms of biological role, in the absence of KRT14, makes a bona fide, but ultrastructurally distinct keratin filament network with KRT5. The sequence is that of Keratin, type I cytoskeletal 15 (Krt15) from Mus musculus (Mouse).